The chain runs to 276 residues: Formamidopyrimidine-DNA glycosylase (276 aa).

Residue P2 is the Schiff-base intermediate with DNA of the active site. The active-site Proton donor is E3. Residue K58 is the Proton donor; for beta-elimination activity of the active site. The DNA site is built by H92, R111, and R153. An FPG-type zinc finger spans residues 238–272; sequence TVYGRERQNCLNCSSTIIKTKHSGRSTFYCRTCQY. R262 serves as the catalytic Proton donor; for delta-elimination activity.

This sequence belongs to the FPG family. Monomer. Zn(2+) is required as a cofactor.

It carries out the reaction Hydrolysis of DNA containing ring-opened 7-methylguanine residues, releasing 2,6-diamino-4-hydroxy-5-(N-methyl)formamidopyrimidine.. The enzyme catalyses 2'-deoxyribonucleotide-(2'-deoxyribose 5'-phosphate)-2'-deoxyribonucleotide-DNA = a 3'-end 2'-deoxyribonucleotide-(2,3-dehydro-2,3-deoxyribose 5'-phosphate)-DNA + a 5'-end 5'-phospho-2'-deoxyribonucleoside-DNA + H(+). Its function is as follows. Involved in base excision repair of DNA damaged by oxidation or by mutagenic agents. Acts as a DNA glycosylase that recognizes and removes damaged bases. Has a preference for oxidized purines, such as 7,8-dihydro-8-oxoguanine (8-oxoG). Has AP (apurinic/apyrimidinic) lyase activity and introduces nicks in the DNA strand. Cleaves the DNA backbone by beta-delta elimination to generate a single-strand break at the site of the removed base with both 3'- and 5'-phosphates. This Rickettsia felis (strain ATCC VR-1525 / URRWXCal2) (Rickettsia azadi) protein is Formamidopyrimidine-DNA glycosylase.